The primary structure comprises 377 residues: Nitric oxide reductase FlRd-NAD(+) reductase (377 aa).

This sequence belongs to the FAD-dependent oxidoreductase family. Requires FAD as cofactor.

The protein resides in the cytoplasm. The catalysed reaction is 2 reduced [nitric oxide reductase rubredoxin domain] + NAD(+) + H(+) = 2 oxidized [nitric oxide reductase rubredoxin domain] + NADH. It functions in the pathway nitrogen metabolism; nitric oxide reduction. One of at least two accessory proteins for anaerobic nitric oxide (NO) reductase. Reduces the rubredoxin moiety of NO reductase. The sequence is that of Nitric oxide reductase FlRd-NAD(+) reductase from Salmonella heidelberg (strain SL476).